The primary structure comprises 508 residues: Lysine--tRNA ligase (508 aa).

E403 and E410 together coordinate Mg(2+).

Belongs to the class-II aminoacyl-tRNA synthetase family. As to quaternary structure, homodimer. The cofactor is Mg(2+).

The protein localises to the cytoplasm. It carries out the reaction tRNA(Lys) + L-lysine + ATP = L-lysyl-tRNA(Lys) + AMP + diphosphate. This Methanoculleus marisnigri (strain ATCC 35101 / DSM 1498 / JR1) protein is Lysine--tRNA ligase.